The chain runs to 381 residues: Succinyl-diaminopimelate desuccinylase (381 aa).

His71 provides a ligand contact to Zn(2+). The active site involves Asp73. Asp104 contacts Zn(2+). Catalysis depends on Glu136, which acts as the Proton acceptor. Zn(2+) contacts are provided by Glu137, Glu166, and His351.

This sequence belongs to the peptidase M20A family. DapE subfamily. In terms of assembly, homodimer. Requires Zn(2+) as cofactor. The cofactor is Co(2+).

It carries out the reaction N-succinyl-(2S,6S)-2,6-diaminopimelate + H2O = (2S,6S)-2,6-diaminopimelate + succinate. Its pathway is amino-acid biosynthesis; L-lysine biosynthesis via DAP pathway; LL-2,6-diaminopimelate from (S)-tetrahydrodipicolinate (succinylase route): step 3/3. Its function is as follows. Catalyzes the hydrolysis of N-succinyl-L,L-diaminopimelic acid (SDAP), forming succinate and LL-2,6-diaminopimelate (DAP), an intermediate involved in the bacterial biosynthesis of lysine and meso-diaminopimelic acid, an essential component of bacterial cell walls. The chain is Succinyl-diaminopimelate desuccinylase from Ehrlichia chaffeensis (strain ATCC CRL-10679 / Arkansas).